The following is a 153-amino-acid chain: Regulator of sigma D (153 aa).

The protein belongs to the Rsd/AlgQ family. Interacts with RpoD.

It localises to the cytoplasm. In terms of biological role, binds RpoD and negatively regulates RpoD-mediated transcription activation by preventing the interaction between the primary sigma factor RpoD with the catalytic core of the RNA polymerase and with promoter DNA. May be involved in replacement of the RNA polymerase sigma subunit from RpoD to RpoS during the transition from exponential growth to the stationary phase. The polypeptide is Regulator of sigma D (Pectobacterium atrosepticum (strain SCRI 1043 / ATCC BAA-672) (Erwinia carotovora subsp. atroseptica)).